The following is a 180-amino-acid chain: ATP-dependent protease subunit HslV (180 aa).

The active site involves Thr-8. Na(+) is bound by residues Gly-165, Cys-168, and Thr-171.

This sequence belongs to the peptidase T1B family. HslV subfamily. A double ring-shaped homohexamer of HslV is capped on each side by a ring-shaped HslU homohexamer. The assembly of the HslU/HslV complex is dependent on binding of ATP.

The protein localises to the cytoplasm. The catalysed reaction is ATP-dependent cleavage of peptide bonds with broad specificity.. With respect to regulation, allosterically activated by HslU binding. Its function is as follows. Protease subunit of a proteasome-like degradation complex believed to be a general protein degrading machinery. The sequence is that of ATP-dependent protease subunit HslV from Halalkalibacterium halodurans (strain ATCC BAA-125 / DSM 18197 / FERM 7344 / JCM 9153 / C-125) (Bacillus halodurans).